Reading from the N-terminus, the 177-residue chain is Large ribosomal subunit protein uL6 (177 aa).

It belongs to the universal ribosomal protein uL6 family. Part of the 50S ribosomal subunit.

This protein binds to the 23S rRNA, and is important in its secondary structure. It is located near the subunit interface in the base of the L7/L12 stalk, and near the tRNA binding site of the peptidyltransferase center. This Neisseria meningitidis serogroup B (strain ATCC BAA-335 / MC58) protein is Large ribosomal subunit protein uL6.